The chain runs to 97 residues: Aspartyl/glutamyl-tRNA(Asn/Gln) amidotransferase subunit C (97 aa).

Belongs to the GatC family. In terms of assembly, heterotrimer of A, B and C subunits.

The catalysed reaction is L-glutamyl-tRNA(Gln) + L-glutamine + ATP + H2O = L-glutaminyl-tRNA(Gln) + L-glutamate + ADP + phosphate + H(+). The enzyme catalyses L-aspartyl-tRNA(Asn) + L-glutamine + ATP + H2O = L-asparaginyl-tRNA(Asn) + L-glutamate + ADP + phosphate + 2 H(+). In terms of biological role, allows the formation of correctly charged Asn-tRNA(Asn) or Gln-tRNA(Gln) through the transamidation of misacylated Asp-tRNA(Asn) or Glu-tRNA(Gln) in organisms which lack either or both of asparaginyl-tRNA or glutaminyl-tRNA synthetases. The reaction takes place in the presence of glutamine and ATP through an activated phospho-Asp-tRNA(Asn) or phospho-Glu-tRNA(Gln). The polypeptide is Aspartyl/glutamyl-tRNA(Asn/Gln) amidotransferase subunit C (Prochlorococcus marinus (strain MIT 9303)).